We begin with the raw amino-acid sequence, 875 residues long: Leucine--tRNA ligase (875 aa).

The 'HIGH' region motif lies at 57 to 67 (PYPSGQIHMGH). Residues 631-635 (KMSKS) carry the 'KMSKS' region motif. Lys634 provides a ligand contact to ATP.

This sequence belongs to the class-I aminoacyl-tRNA synthetase family.

It localises to the cytoplasm. The catalysed reaction is tRNA(Leu) + L-leucine + ATP = L-leucyl-tRNA(Leu) + AMP + diphosphate. This chain is Leucine--tRNA ligase, found in Granulibacter bethesdensis (strain ATCC BAA-1260 / CGDNIH1).